Here is a 376-residue protein sequence, read N- to C-terminus: Chaperone protein DnaJ (376 aa).

Residues 5–70 form the J domain; the sequence is DYYEILGVSK…QKRAAYDQYG (66 aa). Residues 131–209 form a CR-type zinc finger; that stretch reads GVTKEIRIPT…CHGHGRVERS (79 aa). Cysteine 144, cysteine 147, cysteine 161, cysteine 164, cysteine 183, cysteine 186, cysteine 197, and cysteine 200 together coordinate Zn(2+). 4 CXXCXGXG motif repeats span residues 144–151, 161–168, 183–190, and 197–204; these read CDVCHGSG, CPTCHGSG, CPHCQGRG, and CNKCHGHG.

Belongs to the DnaJ family. In terms of assembly, homodimer. Zn(2+) is required as a cofactor.

It is found in the cytoplasm. Its function is as follows. Participates actively in the response to hyperosmotic and heat shock by preventing the aggregation of stress-denatured proteins and by disaggregating proteins, also in an autonomous, DnaK-independent fashion. Unfolded proteins bind initially to DnaJ; upon interaction with the DnaJ-bound protein, DnaK hydrolyzes its bound ATP, resulting in the formation of a stable complex. GrpE releases ADP from DnaK; ATP binding to DnaK triggers the release of the substrate protein, thus completing the reaction cycle. Several rounds of ATP-dependent interactions between DnaJ, DnaK and GrpE are required for fully efficient folding. Also involved, together with DnaK and GrpE, in the DNA replication of plasmids through activation of initiation proteins. This is Chaperone protein DnaJ from Shigella flexneri.